The primary structure comprises 174 residues: Bifunctional protein PyrR 2 (174 aa).

Residues 39 to 40 (TR), 100 to 108 (DDVLFTGRT), and R133 each bind substrate. A PRPP-binding motif is present at residues 96-108 (VILVDDVLFTGRT).

This sequence belongs to the purine/pyrimidine phosphoribosyltransferase family. PyrR subfamily. In terms of assembly, homodimer and homohexamer; in equilibrium.

The catalysed reaction is UMP + diphosphate = 5-phospho-alpha-D-ribose 1-diphosphate + uracil. Regulates transcriptional attenuation of the pyrimidine nucleotide (pyr) operon by binding in a uridine-dependent manner to specific sites on pyr mRNA. This disrupts an antiterminator hairpin in the RNA and favors formation of a downstream transcription terminator, leading to a reduced expression of downstream genes. Its function is as follows. Also displays a weak uracil phosphoribosyltransferase activity which is not physiologically significant. The sequence is that of Bifunctional protein PyrR 2 (pyrR2) from Lactiplantibacillus plantarum (strain ATCC BAA-793 / NCIMB 8826 / WCFS1) (Lactobacillus plantarum).